The following is a 129-amino-acid chain: Small ribosomal subunit protein uS8mz (129 aa).

The protein belongs to the universal ribosomal protein uS8 family. Component of the mitochondrial ribosome small subunit.

The protein resides in the mitochondrion. This chain is Small ribosomal subunit protein uS8mz (RPS15AB), found in Arabidopsis thaliana (Mouse-ear cress).